Here is a 599-residue protein sequence, read N- to C-terminus: Elongation factor 4 (599 aa).

Residues 4–186 form the tr-type G domain; the sequence is ENIRNFSIIA…EIVTKIPPPQ (183 aa). GTP-binding positions include 16–21 and 133–136; these read DHGKST and NKID.

It belongs to the TRAFAC class translation factor GTPase superfamily. Classic translation factor GTPase family. LepA subfamily.

Its subcellular location is the cell inner membrane. It carries out the reaction GTP + H2O = GDP + phosphate + H(+). Functionally, required for accurate and efficient protein synthesis under certain stress conditions. May act as a fidelity factor of the translation reaction, by catalyzing a one-codon backward translocation of tRNAs on improperly translocated ribosomes. Back-translocation proceeds from a post-translocation (POST) complex to a pre-translocation (PRE) complex, thus giving elongation factor G a second chance to translocate the tRNAs correctly. Binds to ribosomes in a GTP-dependent manner. The sequence is that of Elongation factor 4 from Geotalea uraniireducens (strain Rf4) (Geobacter uraniireducens).